Consider the following 483-residue polypeptide: Aspartyl/glutamyl-tRNA(Asn/Gln) amidotransferase subunit B (483 aa).

This sequence belongs to the GatB/GatE family. GatB subfamily. As to quaternary structure, heterotrimer of A, B and C subunits.

The catalysed reaction is L-glutamyl-tRNA(Gln) + L-glutamine + ATP + H2O = L-glutaminyl-tRNA(Gln) + L-glutamate + ADP + phosphate + H(+). It carries out the reaction L-aspartyl-tRNA(Asn) + L-glutamine + ATP + H2O = L-asparaginyl-tRNA(Asn) + L-glutamate + ADP + phosphate + 2 H(+). Its function is as follows. Allows the formation of correctly charged Asn-tRNA(Asn) or Gln-tRNA(Gln) through the transamidation of misacylated Asp-tRNA(Asn) or Glu-tRNA(Gln) in organisms which lack either or both of asparaginyl-tRNA or glutaminyl-tRNA synthetases. The reaction takes place in the presence of glutamine and ATP through an activated phospho-Asp-tRNA(Asn) or phospho-Glu-tRNA(Gln). This Rickettsia canadensis (strain McKiel) protein is Aspartyl/glutamyl-tRNA(Asn/Gln) amidotransferase subunit B.